The following is a 458-amino-acid chain: Transcription termination factor Rho (458 aa).

The disordered stretch occupies residues 1–23; that stretch reads MNTTNKESTAELNNTESNNNYNN. Residues 10–23 are compositionally biased toward low complexity; sequence AELNNTESNNNYNN. The Rho RNA-BD domain occupies 78 to 153; that stretch reads LIVGEGVLEV…LKVNRVNFED (76 aa). ATP contacts are provided by residues 201–206, 213–218, and R244; these read GKGQRA and RTGKTV.

It belongs to the Rho family. In terms of assembly, homohexamer. The homohexamer assembles into an open ring structure.

Facilitates transcription termination by a mechanism that involves Rho binding to the nascent RNA, activation of Rho's RNA-dependent ATPase activity, and release of the mRNA from the DNA template. This chain is Transcription termination factor Rho, found in Rickettsia conorii (strain ATCC VR-613 / Malish 7).